Consider the following 1048-residue polypeptide: FHIP family protein GJ17503 (1048 aa).

Residues 1 to 15 are compositionally biased toward polar residues; sequence MSWLRTSPLRQSLTR. The interval 1–32 is disordered; sequence MSWLRTSPLRQSLTRNSGSSGSGNSSATTTLR. The segment covering 16-26 has biased composition (low complexity); the sequence is NSGSSGSGNSS. Ser-500 carries the phosphoserine modification. Disordered stretches follow at residues 652-675, 813-871, and 924-984; these read TTTATSDTDLEHNNSSSIGSGRRD, APMH…KRRS, and ARGA…ESGL. Residues 816-838 are compositionally biased toward low complexity; the sequence is HQQHQQQQLQHTTNPTQQQQAQQ. Polar residues-rich tracts occupy residues 839 to 857 and 929 to 954; these read RSTYATLSAATPVQASPTS and QEQSRGNTCETSLSTAPRQEAQTAVV. A compositionally biased stretch (low complexity) spans 955–978; sequence SSSNSSIGGSTQTLSATHSSSTLH.

This sequence belongs to the FHIP family.

The sequence is that of FHIP family protein GJ17503 from Drosophila virilis (Fruit fly).